A 286-amino-acid chain; its full sequence is Translocon-associated protein subunit alpha (286 aa).

The first 18 residues, 1–18 (MRLLPRLLLLLLLVFPAT), serve as a signal peptide directing secretion. The Lumenal portion of the chain corresponds to 19-207 (VLFRGGPRGL…EREDGLDGET (189 aa)). A compositionally biased stretch (acidic residues) spans 39-75 (EETVEDSIIEDEDDEAEVEEDEPTDLVEDKEEEDVSG). A disordered region spans residues 39-83 (EETVEDSIIEDEDDEAEVEEDEPTDLVEDKEEEDVSGEPEASPSA). Asn-136 and Asn-191 each carry an N-linked (GlcNAc...) asparagine glycan. Residues 208 to 228 (IFMYMFLAGLGLLVIVGLHQL) traverse the membrane as a helical segment. Residues 229–286 (LESRKRKRPIQKVEMGTSSQNDVDMSWIPQETLNQINKASPRRLPRKRAQKRSVGSDE) lie on the Cytoplasmic side of the membrane. Phosphoserine is present on Ser-247. At Thr-260 the chain carries Phosphothreonine. The segment at 261–286 (LNQINKASPRRLPRKRAQKRSVGSDE) is disordered. Ser-268 bears the Phosphoserine mark. Over residues 268-279 (SPRRLPRKRAQK) the composition is skewed to basic residues.

Belongs to the TRAP-alpha family. In terms of assembly, heterotetramer of TRAP-alpha, TRAP-beta, TRAP-delta and TRAP-gamma. Interacts with palmitoylated calnexin (CALX), the interaction is required for efficient folding of glycosylated proteins.

The protein localises to the endoplasmic reticulum membrane. TRAP proteins are part of a complex whose function is to bind calcium to the ER membrane and thereby regulate the retention of ER resident proteins. May be involved in the recycling of the translocation apparatus after completion of the translocation process or may function as a membrane-bound chaperone facilitating folding of translocated proteins. This chain is Translocon-associated protein subunit alpha (SSR1), found in Homo sapiens (Human).